A 333-amino-acid chain; its full sequence is tRNA uridine(34) hydroxylase (333 aa).

The 95-residue stretch at 123-217 folds into the Rhodanese domain; that stretch reads SDPEVILVDT…YLEEIKQEES (95 aa). Cys177 acts as the Cysteine persulfide intermediate in catalysis.

Belongs to the TrhO family.

It catalyses the reaction uridine(34) in tRNA + AH2 + O2 = 5-hydroxyuridine(34) in tRNA + A + H2O. Its function is as follows. Catalyzes oxygen-dependent 5-hydroxyuridine (ho5U) modification at position 34 in tRNAs. This Shewanella sp. (strain MR-7) protein is tRNA uridine(34) hydroxylase.